The following is a 268-amino-acid chain: Ribosomal RNA small subunit methyltransferase A (268 aa).

6 residues coordinate S-adenosyl-L-methionine: N16, L18, G43, E64, D89, and N110.

This sequence belongs to the class I-like SAM-binding methyltransferase superfamily. rRNA adenine N(6)-methyltransferase family. RsmA subfamily.

The protein localises to the cytoplasm. The enzyme catalyses adenosine(1518)/adenosine(1519) in 16S rRNA + 4 S-adenosyl-L-methionine = N(6)-dimethyladenosine(1518)/N(6)-dimethyladenosine(1519) in 16S rRNA + 4 S-adenosyl-L-homocysteine + 4 H(+). Functionally, specifically dimethylates two adjacent adenosines (A1518 and A1519) in the loop of a conserved hairpin near the 3'-end of 16S rRNA in the 30S particle. May play a critical role in biogenesis of 30S subunits. The polypeptide is Ribosomal RNA small subunit methyltransferase A (Pseudomonas savastanoi pv. phaseolicola (strain 1448A / Race 6) (Pseudomonas syringae pv. phaseolicola (strain 1448A / Race 6))).